A 78-amino-acid polypeptide reads, in one-letter code: Longicornsin (78 aa).

The N-terminal stretch at Met1–Ser22 is a signal peptide. Residues Glu23–Ser29 constitute a propeptide that is removed on maturation. 3 cysteine pairs are disulfide-bonded: Cys35–Cys58, Cys43–Cys63, and Cys47–Cys65.

Salivary glands (at protein level).

The protein resides in the secreted. Its function is as follows. Has antibacterial activity against the Gram-positive bacteria S.aureus ATCC2592 (MIC=0.8 ug/ml), S.aureus 6A (MIC=0.8 ug/ml) and S.aureus 15A (MIC=1.6 ug/ml), and against the Gram-negative bacteria E.coli ATCC 25922 (MIC=3.2 ug/ml), E.coli 23A (MIC=6.4 ug/ml), E.coli 27A (MIC=6.4 ug/ml), P.aeruginosa 3A (MIC=3.2 ug/ml), P.aeruginosa 7A (MIC=0.8 ug/ml) and H.pylori NCTC11637 (MIC=6.4 ug/ml). Has antifungal activity against C.albidus ATCC2002 (MIC=25.6 ug/ml). Very low hemolytic activity against rabbit erythrocytes. The polypeptide is Longicornsin (Haemaphysalis longicornis (Bush tick)).